Consider the following 235-residue polypeptide: Ribonuclease 3 (235 aa).

The region spanning 6-131 (IDQLFKLTGH…LIAVMYLDGG (126 aa)) is the RNase III domain. Glu-44 is a binding site for Mg(2+). Asp-48 is a catalytic residue. Residues Asp-117 and Glu-120 each coordinate Mg(2+). Glu-120 is a catalytic residue. The DRBM domain maps to 156–225 (DAKTELQEWA…AEKILRREGV (70 aa)).

Belongs to the ribonuclease III family. As to quaternary structure, homodimer. It depends on Mg(2+) as a cofactor.

It is found in the cytoplasm. The enzyme catalyses Endonucleolytic cleavage to 5'-phosphomonoester.. Digests double-stranded RNA. Involved in the processing of primary rRNA transcript to yield the immediate precursors to the large and small rRNAs (23S and 16S). Processes some mRNAs, and tRNAs when they are encoded in the rRNA operon. Processes pre-crRNA and tracrRNA of type II CRISPR loci if present in the organism. The sequence is that of Ribonuclease 3 from Bartonella tribocorum (strain CIP 105476 / IBS 506).